The following is a 632-amino-acid chain: MTHEFTESYDVIVIGAGHAGVEASLATSRMGCKTLLATINLDMLAFMPCNPSIGGSAKGIVVREIDALGGEMGKNIDKTYIQMKMLNTGKGPAVRALRAQADKSLYAREMKHTVEKQANLTLRQTMIDDILVEDGRVVGVLTATGQKFAAKAVVVTTGTALRGEIILGELKYSSGPNNSLASVTLADNLKKLGLEIGRFKTGTPPRVKASSINYDQTEIQPGDDKPNHFSFMSKDADYLKDQIPCWLTYTNQTSHDIINQNLYRAPMFSGIVKGVGPRYCPSIEDKIVRFADKERHQLFLEPEGRDTEEVYVQGLSTSLPEDVQKDLIHSIKGLEKAEMMRTGYAIEYDIVLPHQLRATLETKLISGLFTAGQTNGTSGYEEAAGQGLIAGINAALKVQGKSELILKRSDAYIGVMIDDLVTKGTLEPYRLLTSRAEYRLILRHDNADMRLTEIGRDIGLVDDERWKAFEIKKNQFDNELKRLNSIKLKPVKATNDRVQELGFKPLTDAMIAKEFMRRPEIDYATAVSFVGPAAEDLDAKIIELLETEIKYEGYIRKALDQVAKMKRMEEKRIPANIDWDAIDSIATEARQKFKKINPETIGQASRISGVNPADISILMIYLEGNGKAHRKY.

Residues 15–20, isoleucine 127, and serine 182 each bind FAD; that span reads GAGHAG. Residue 276-290 participates in NAD(+) binding; sequence GPRYCPSIEDKIVRF. Glutamine 373 provides a ligand contact to FAD.

Belongs to the MnmG family. Homodimer. Heterotetramer of two MnmE and two MnmG subunits. The cofactor is FAD.

It localises to the cytoplasm. Its function is as follows. NAD-binding protein involved in the addition of a carboxymethylaminomethyl (cmnm) group at the wobble position (U34) of certain tRNAs, forming tRNA-cmnm(5)s(2)U34. The polypeptide is tRNA uridine 5-carboxymethylaminomethyl modification enzyme MnmG (Streptococcus pyogenes serotype M6 (strain ATCC BAA-946 / MGAS10394)).